The following is a 176-amino-acid chain: Shikimate kinase (176 aa).

12–17 provides a ligand contact to ATP; sequence GSGKST. Ser-16 lines the Mg(2+) pocket. Substrate contacts are provided by Asp-34, Arg-58, and Gly-80. Arg-117 provides a ligand contact to ATP. Residue Arg-136 participates in substrate binding. Position 153 (Arg-153) interacts with ATP.

This sequence belongs to the shikimate kinase family. As to quaternary structure, monomer. It depends on Mg(2+) as a cofactor.

The protein localises to the cytoplasm. It catalyses the reaction shikimate + ATP = 3-phosphoshikimate + ADP + H(+). It functions in the pathway metabolic intermediate biosynthesis; chorismate biosynthesis; chorismate from D-erythrose 4-phosphate and phosphoenolpyruvate: step 5/7. Its function is as follows. Catalyzes the specific phosphorylation of the 3-hydroxyl group of shikimic acid using ATP as a cosubstrate. This chain is Shikimate kinase, found in Mycobacterium avium (strain 104).